Consider the following 864-residue polypeptide: Alanine--tRNA ligase (864 aa).

Zn(2+) contacts are provided by His553, His557, Cys655, and His659. Positions 828 to 847 (VGGKGGGRPDMAQAGGKDPS) are disordered.

Belongs to the class-II aminoacyl-tRNA synthetase family. Requires Zn(2+) as cofactor.

It is found in the cytoplasm. It catalyses the reaction tRNA(Ala) + L-alanine + ATP = L-alanyl-tRNA(Ala) + AMP + diphosphate. Catalyzes the attachment of alanine to tRNA(Ala) in a two-step reaction: alanine is first activated by ATP to form Ala-AMP and then transferred to the acceptor end of tRNA(Ala). Also edits incorrectly charged Ser-tRNA(Ala) and Gly-tRNA(Ala) via its editing domain. The chain is Alanine--tRNA ligase from Hydrogenovibrio crunogenus (strain DSM 25203 / XCL-2) (Thiomicrospira crunogena).